An 894-amino-acid polypeptide reads, in one-letter code: Alanine--tRNA ligase (894 aa).

His-569, His-573, Cys-683, and His-687 together coordinate Zn(2+).

This sequence belongs to the class-II aminoacyl-tRNA synthetase family. Zn(2+) serves as cofactor.

It is found in the cytoplasm. The catalysed reaction is tRNA(Ala) + L-alanine + ATP = L-alanyl-tRNA(Ala) + AMP + diphosphate. In terms of biological role, catalyzes the attachment of alanine to tRNA(Ala) in a two-step reaction: alanine is first activated by ATP to form Ala-AMP and then transferred to the acceptor end of tRNA(Ala). Also edits incorrectly charged Ser-tRNA(Ala) and Gly-tRNA(Ala) via its editing domain. In Chloroflexus aurantiacus (strain ATCC 29366 / DSM 635 / J-10-fl), this protein is Alanine--tRNA ligase.